Here is a 108-residue protein sequence, read N- to C-terminus: Trp operon repressor homolog (108 aa).

The DNA-binding element occupies Gln59–Ser82.

It belongs to the TrpR family. In terms of assembly, homodimer.

The protein localises to the cytoplasm. In terms of biological role, this protein is an aporepressor. When complexed with L-tryptophan it binds the operator region of the trp operon and prevents the initiation of transcription. The chain is Trp operon repressor homolog from Aliivibrio salmonicida (strain LFI1238) (Vibrio salmonicida (strain LFI1238)).